Reading from the N-terminus, the 269-residue chain is Intercellular adhesion molecule 4 (269 aa).

Positions 1-20 (SLFPLSLLFFLAAAYPGVGS) are cleaved as a signal peptide. Residues 21-238 (ALGRRTKRAQ…MLAWSSAPTA (218 aa)) lie on the Extracellular side of the membrane. 2 consecutive Ig-like C2-type domains span residues 60–122 (GKSV…TRWA) and 144–215 (GRKY…LNLD). N-linked (GlcNAc...) asparagine glycans are attached at residues asparagine 66, asparagine 76, asparagine 188, and asparagine 221. 4 cysteine pairs are disulfide-bonded: cysteine 67-cysteine 111, cysteine 67-cysteine 115, cysteine 71-cysteine 115, and cysteine 151-cysteine 208. A helical membrane pass occupies residues 239–259 (LASVSIAALVGILLTVGAAYL). Residues 260–269 (CKCLAMKSQA) lie on the Cytoplasmic side of the membrane.

Belongs to the immunoglobulin superfamily. ICAM family. N- and O-glycosylated.

The protein localises to the cell membrane. Functionally, ICAM proteins are ligands for the leukocyte adhesion protein LFA-1 (integrin alpha-L/beta-2). ICAM4 is also a ligand for alpha-4/beta-1 and alpha-V integrins. This Pan troglodytes (Chimpanzee) protein is Intercellular adhesion molecule 4 (ICAM4).